The sequence spans 177 residues: dCTP deaminase (177 aa).

DCTP-binding positions include 100–105 (RSSIAR) and Asp116. The active-site Proton donor/acceptor is the Glu126. 2 residues coordinate dCTP: Tyr159 and Gln166.

Belongs to the dCTP deaminase family. Homotrimer.

It carries out the reaction dCTP + H2O + H(+) = dUTP + NH4(+). Its pathway is pyrimidine metabolism; dUMP biosynthesis; dUMP from dCTP (dUTP route): step 1/2. In terms of biological role, catalyzes the deamination of dCTP to dUTP. This Korarchaeum cryptofilum (strain OPF8) protein is dCTP deaminase.